The chain runs to 433 residues: Zinc finger protein CONSTANS-LIKE 15 (433 aa).

Cys-9, Cys-12, Cys-32, His-37, Cys-52, Cys-55, Cys-75, and His-80 together coordinate Zn(2+). The B box-type 1; atypical zinc-finger motif lies at 9 to 51 (CDFCGERTAVLFCRADTAKLCLPCDQQVHTANLLSRKHVRSQI). The B box-type 2; atypical zinc-finger motif lies at 52-94 (CDNCGNEPVSVRCFTDNLILCQECDWDVHGSCSVSDAHVRSAV). The tract at residues 319–353 (DDYKRSTSGQVQPTKSESNNRPITFGSEKGSNSSS) is disordered. The span at 324-340 (STSGQVQPTKSESNNRP) shows a compositional bias: polar residues. Residues 374-398 (TKADLERLAQNRGDAMQRYKEKRKT) are a coiled coil. Residues 385 to 427 (RGDAMQRYKEKRKTRRYDKTIRYESRKARADTRLRVRGRFVKA) form the CCT domain.

Belongs to the CONSTANS family.

The protein localises to the nucleus. This chain is Zinc finger protein CONSTANS-LIKE 15 (COL15), found in Arabidopsis thaliana (Mouse-ear cress).